The primary structure comprises 323 residues: Serine/threonine-protein kinase-transforming protein raf (323 aa).

Positions 24–284 constitute a Protein kinase domain; it reads VMLSTRIGSG…PQILSSIELL (261 aa). ATP contacts are provided by residues 30 to 38 and Lys50; that span reads IGSGSFGTV. Asp143 serves as the catalytic Proton acceptor.

The protein belongs to the protein kinase superfamily. TKL Ser/Thr protein kinase family. RAF subfamily.

The enzyme catalyses L-seryl-[protein] + ATP = O-phospho-L-seryl-[protein] + ADP + H(+). The catalysed reaction is L-threonyl-[protein] + ATP = O-phospho-L-threonyl-[protein] + ADP + H(+). In Murine sarcoma virus 3611, this protein is Serine/threonine-protein kinase-transforming protein raf (V-RAF).